The sequence spans 364 residues: Glycerophosphodiester phosphodiesterase (364 aa).

The signal sequence occupies residues 1-18; that stretch reads MKLKTLALSLLAAGVLAG. A lipid anchor (N-palmitoyl cysteine) is attached at Cys19. Cys19 carries S-diacylglycerol cysteine lipidation. A GP-PDE domain is found at 35–360; that stretch reads KIIIAHRGAS…DFPDTGVEFL (326 aa). His40 functions as the Proton acceptor in the catalytic mechanism. Ca(2+) is bound by residues Glu67 and Asp69. Residue His82 is the Proton donor of the active site. Glu175 lines the Ca(2+) pocket.

It belongs to the glycerophosphoryl diester phosphodiesterase family. Requires Ca(2+) as cofactor. Post-translationally, contains both ester- and amide-linked fatty acids.

It is found in the cell outer membrane. It catalyses the reaction a sn-glycero-3-phosphodiester + H2O = an alcohol + sn-glycerol 3-phosphate + H(+). In terms of biological role, glycerophosphodiester phosphodiesterase hydrolyzes glycerophosphodiesters into glycerol-3-phosphate (G3P) and the corresponding alcohol. Has a specific affinity for human immunoglobulin D myeloma protein. The sequence is that of Glycerophosphodiester phosphodiesterase (glpQ) from Haemophilus influenzae (strain ATCC 51907 / DSM 11121 / KW20 / Rd).